We begin with the raw amino-acid sequence, 243 residues long: Probable septum site-determining protein MinC (243 aa).

Belongs to the MinC family. Interacts with MinD and FtsZ.

Its function is as follows. Cell division inhibitor that blocks the formation of polar Z ring septums. Rapidly oscillates between the poles of the cell to destabilize FtsZ filaments that have formed before they mature into polar Z rings. Prevents FtsZ polymerization. This is Probable septum site-determining protein MinC from Wigglesworthia glossinidia brevipalpis.